We begin with the raw amino-acid sequence, 202 residues long: MTLLNQYTGIVIPINISNIDTDVIIPKQFLKKINKKGFGKYLFYNWRFNDNEGKNINKNFILNDLRYKKSSILLTRDNFGCGSSREHAVWALMDYGFKVIIASSFGDIFYNNCLNNHLIPIILSENKINTLFDITSNYIDVSFTIDLKNNTILAKNYAYYFKIDALHKFCIMHQLDQIDLTMKNEKKITKYEKKIFDFFIKK.

It belongs to the LeuD family. LeuD type 1 subfamily. Heterodimer of LeuC and LeuD.

The enzyme catalyses (2R,3S)-3-isopropylmalate = (2S)-2-isopropylmalate. It functions in the pathway amino-acid biosynthesis; L-leucine biosynthesis; L-leucine from 3-methyl-2-oxobutanoate: step 2/4. Functionally, catalyzes the isomerization between 2-isopropylmalate and 3-isopropylmalate, via the formation of 2-isopropylmaleate. The chain is 3-isopropylmalate dehydratase small subunit from Buchnera aphidicola subsp. Pemphigus spyrothecae.